A 96-amino-acid chain; its full sequence is Putative membrane protein insertion efficiency factor (96 aa).

This sequence belongs to the UPF0161 family.

The protein localises to the cell inner membrane. Could be involved in insertion of integral membrane proteins into the membrane. This chain is Putative membrane protein insertion efficiency factor, found in Borreliella afzelii (strain PKo) (Borrelia afzelii).